The primary structure comprises 464 residues: 3-isopropylmalate dehydratase large subunit (464 aa).

Residues cysteine 337, cysteine 397, and cysteine 400 each contribute to the [4Fe-4S] cluster site.

The protein belongs to the aconitase/IPM isomerase family. LeuC type 1 subfamily. As to quaternary structure, heterodimer of LeuC and LeuD. [4Fe-4S] cluster serves as cofactor.

It catalyses the reaction (2R,3S)-3-isopropylmalate = (2S)-2-isopropylmalate. It functions in the pathway amino-acid biosynthesis; L-leucine biosynthesis; L-leucine from 3-methyl-2-oxobutanoate: step 2/4. Functionally, catalyzes the isomerization between 2-isopropylmalate and 3-isopropylmalate, via the formation of 2-isopropylmaleate. This chain is 3-isopropylmalate dehydratase large subunit, found in Bacillus thuringiensis subsp. konkukian (strain 97-27).